The primary structure comprises 269 residues: MKTEGIKSPSAKYHDMAGSQRIPHKNPHIQKVAVLQSKPNKEDALNLIKEIAHKVSYLMKENHFKVTNLVEFYPRDQRLLGMNVNHGSKIMLRLRCSTDEFQFLPMECIMGTMLHELTHNLFGPHDKKFYNKLDELIGRQWVIEQRGLYDTFLGNGQRLGGRANLRSNRYPMTGISTNTGIVRKRGKGVKLGSLHPEGISSIDRGNSPRELAAFAAERRYRDDRWCGETKNNKDQIISDNISSSLEVVILDDDDEVLPGDTLIEVIDLT.

The disordered stretch occupies residues 1 to 22 (MKTEGIKSPSAKYHDMAGSQRI). Residues 20-221 (QRIPHKNPHI…AAFAAERRYR (202 aa)) form the WLM domain. His115 is a Zn(2+) binding site. Glu116 is a catalytic residue. His119 and His125 together coordinate Zn(2+). Positions 152–160 (FLGNGQRLG) match the SHP box motif. The interval 161–208 (GRANLRSNRYPMTGISTNTGIVRKRGKGVKLGSLHPEGISSIDRGNSP) is required and sufficient for binding to DNA. The VCP-interaction motif (VIM) signature appears at 209–219 (RELAAFAAERR). An SUMO interaction motif 1 (SIM) motif is present at residues 247–254 (VVILDDDD). An SUMO interaction motif 2 (SIM) motif is present at residues 266 to 269 (IDLT).

This sequence belongs to the peptidase M3 family. WSS1-like metalloprotease (WLM) subfamily. In terms of assembly, binds to DNA. Interacts with CDC48 and SMT3. Interacts with PSY2 and TOF1. The cofactor is Zn(2+).

The protein resides in the nucleus. Its activity is regulated as follows. Inactivated by EDTA. Its function is as follows. Metalloendopeptidase that acts selectively on DNA-binding proteins. DNA is needed to bring the protease and substrates together to enable proteolysis. Involved in the repair of toxic DNA-protein cross-links (DPCs) such as covalently trapped topoisomerase 1 (TOP1) adducts on DNA lesions or DPCs induced by reactive compounds such as formaldehyde. Involved in DNA damage response and processing of stalled or collapsed replication forks by removing the covalently trapped TOP1 from chromatin. DPC proteolysis enables the repair of the lesions via downstream DNA repair pathways. May be recruited to DPCs via the SUMOylation of substrate proteins at damaged DNA sites. The sequence is that of DNA-dependent metalloprotease WSS1 (WSS1) from Saccharomyces cerevisiae (strain ATCC 204508 / S288c) (Baker's yeast).